The sequence spans 179 residues: Large ribosomal subunit protein uL5 (179 aa).

Belongs to the universal ribosomal protein uL5 family. In terms of assembly, part of the 50S ribosomal subunit; part of the 5S rRNA/L5/L18/L25 subcomplex. Contacts the 5S rRNA and the P site tRNA. Forms a bridge to the 30S subunit in the 70S ribosome.

This is one of the proteins that bind and probably mediate the attachment of the 5S RNA into the large ribosomal subunit, where it forms part of the central protuberance. In the 70S ribosome it contacts protein S13 of the 30S subunit (bridge B1b), connecting the 2 subunits; this bridge is implicated in subunit movement. Contacts the P site tRNA; the 5S rRNA and some of its associated proteins might help stabilize positioning of ribosome-bound tRNAs. The sequence is that of Large ribosomal subunit protein uL5 from Prochlorococcus marinus (strain MIT 9211).